The following is a 123-amino-acid chain: Large ribosomal subunit protein uL18 (123 aa).

It belongs to the universal ribosomal protein uL18 family. Part of the 50S ribosomal subunit; part of the 5S rRNA/L5/L18/L25 subcomplex. Contacts the 5S and 23S rRNAs.

Its function is as follows. This is one of the proteins that bind and probably mediate the attachment of the 5S RNA into the large ribosomal subunit, where it forms part of the central protuberance. This Chlamydia caviae (strain ATCC VR-813 / DSM 19441 / 03DC25 / GPIC) (Chlamydophila caviae) protein is Large ribosomal subunit protein uL18.